We begin with the raw amino-acid sequence, 392 residues long: Odorant receptor 85f (392 aa).

The Cytoplasmic portion of the chain corresponds to 1–36; sequence MEPVQYSYEDFARLPTTVFWIMGYDMLGVPKTRSRR. The chain crosses the membrane as a helical span at residues 37 to 57; it reads ILYWIYRFLCLASHGVCVGVM. Topologically, residues 58–69 are extracellular; sequence VFRMVEAKTIDN. Residue Asn-69 is glycosylated (N-linked (GlcNAc...) asparagine). Residues 70 to 90 traverse the membrane as a helical segment; that stretch reads VSLIMRYATLVTYIINSDTKF. The Cytoplasmic segment spans residues 91-130; that stretch reads ATVLQRSAIQSLNSKLAELYPKTTLDRIYHRVNDHYWTKS. The chain crosses the membrane as a helical span at residues 131 to 151; that stretch reads FVYLVIIYIGSSIMVVIGPII. Over 152-179 the chain is Extracellular; the sequence is TSIIAYFTHNVFTYMHCYPYFLYDPEKD. The chain crosses the membrane as a helical span at residues 180-200; that stretch reads PVWIYISIYALEWLHSTQMVI. The Cytoplasmic portion of the chain corresponds to 201-268; that stretch reads SNIGADIWLL…NDLNGIFGKS (68 aa). The chain crosses the membrane as a helical span at residues 269 to 289; it reads LLLSLLTTAAVICTVAVYTLI. The Extracellular portion of the chain corresponds to 290–295; the sequence is QGPTLE. The helical transmembrane segment at 296 to 316 threads the bilayer; it reads GFTYVIFIGTSVMQVYLVCYY. The Cytoplasmic segment spans residues 317 to 363; it reads GQQVLDLSGEVAHAVYNHDFHDASIAYKRYLLIIIIRAQQPVELNAM. A helical transmembrane segment spans residues 364–384; it reads GYLSISLDTFKQLMSVSYRVI. Residues 385-392 lie on the Extracellular side of the membrane; the sequence is TMLMQMIQ.

This sequence belongs to the insect chemoreceptor superfamily. Heteromeric odorant receptor channel (TC 1.A.69) family. Or49a subfamily. As to quaternary structure, interacts with Orco. Complexes exist early in the endomembrane system in olfactory sensory neurons (OSNs), coupling these complexes to the conserved ciliary trafficking pathway. As to expression, expressed in olfactory sensory neurons in the antenna.

The protein localises to the cell membrane. Odorant receptor which mediates acceptance or avoidance behavior, depending on its substrates. The odorant receptor repertoire encodes a large collection of odor stimuli that vary widely in identity, intensity, and duration. May form a complex with Orco to form odorant-sensing units, providing sensitive and prolonged odorant signaling and calcium permeability. The protein is Odorant receptor 85f (Or85f) of Drosophila melanogaster (Fruit fly).